The sequence spans 585 residues: Membrane protein insertase YidC (585 aa).

The next 6 helical transmembrane spans lie at S5 to P25, F338 to W358, F362 to Y382, L432 to F452, I482 to L502, and I518 to L538.

Belongs to the OXA1/ALB3/YidC family. Type 1 subfamily. As to quaternary structure, interacts with the Sec translocase complex via SecD. Specifically interacts with transmembrane segments of nascent integral membrane proteins during membrane integration.

It localises to the cell inner membrane. In terms of biological role, required for the insertion and/or proper folding and/or complex formation of integral membrane proteins into the membrane. Involved in integration of membrane proteins that insert both dependently and independently of the Sec translocase complex, as well as at least some lipoproteins. Aids folding of multispanning membrane proteins. The polypeptide is Membrane protein insertase YidC (Chlorobium luteolum (strain DSM 273 / BCRC 81028 / 2530) (Pelodictyon luteolum)).